Here is a 109-residue protein sequence, read N- to C-terminus: MLRFKKTPDEVKEMIKLAIKKGYRQIKISSVNPNEFLLRFDGRMWIMGFEFLSDKEIKYSCFENYSFKCILETDAKKVREFLEEIYSKSKIVNGRVKEIPTDVFQVVVA.

This is an uncharacterized protein from Methanocaldococcus jannaschii (strain ATCC 43067 / DSM 2661 / JAL-1 / JCM 10045 / NBRC 100440) (Methanococcus jannaschii).